Here is an 879-residue protein sequence, read N- to C-terminus: Protein translocase subunit SecA (879 aa).

ATP-binding positions include Q86, 104–108 (GEGKT), and D500. Positions 863, 865, 874, and 875 each coordinate Zn(2+).

This sequence belongs to the SecA family. Monomer and homodimer. Part of the essential Sec protein translocation apparatus which comprises SecA, SecYEG and auxiliary proteins SecDF-YajC and YidC. Zn(2+) is required as a cofactor.

Its subcellular location is the cell inner membrane. It is found in the cytoplasm. The catalysed reaction is ATP + H2O + cellular proteinSide 1 = ADP + phosphate + cellular proteinSide 2.. Part of the Sec protein translocase complex. Interacts with the SecYEG preprotein conducting channel. Has a central role in coupling the hydrolysis of ATP to the transfer of proteins into and across the cell membrane, serving both as a receptor for the preprotein-SecB complex and as an ATP-driven molecular motor driving the stepwise translocation of polypeptide chains across the membrane. This Orientia tsutsugamushi (strain Ikeda) (Rickettsia tsutsugamushi) protein is Protein translocase subunit SecA.